A 450-amino-acid polypeptide reads, in one-letter code: Glucose-6-phosphate isomerase (450 aa).

Glu291 serves as the catalytic Proton donor. Residues His312 and Lys426 contribute to the active site.

This sequence belongs to the GPI family.

It is found in the cytoplasm. The catalysed reaction is alpha-D-glucose 6-phosphate = beta-D-fructose 6-phosphate. The protein operates within carbohydrate biosynthesis; gluconeogenesis. It participates in carbohydrate degradation; glycolysis; D-glyceraldehyde 3-phosphate and glycerone phosphate from D-glucose: step 2/4. In terms of biological role, catalyzes the reversible isomerization of glucose-6-phosphate to fructose-6-phosphate. This is Glucose-6-phosphate isomerase from Clostridium perfringens (strain SM101 / Type A).